A 556-amino-acid polypeptide reads, in one-letter code: Formate--tetrahydrofolate ligase (556 aa).

65–72 (TPAGEGKS) lines the ATP pocket.

This sequence belongs to the formate--tetrahydrofolate ligase family.

It carries out the reaction (6S)-5,6,7,8-tetrahydrofolate + formate + ATP = (6R)-10-formyltetrahydrofolate + ADP + phosphate. The protein operates within one-carbon metabolism; tetrahydrofolate interconversion. The polypeptide is Formate--tetrahydrofolate ligase (Streptococcus pneumoniae (strain JJA)).